The following is a 94-amino-acid chain: Small ribosomal subunit protein bS20 (94 aa).

It belongs to the bacterial ribosomal protein bS20 family.

Binds directly to 16S ribosomal RNA. The chain is Small ribosomal subunit protein bS20 from Acaryochloris marina (strain MBIC 11017).